The sequence spans 304 residues: Aspartate carbamoyltransferase catalytic subunit (304 aa).

Carbamoyl phosphate-binding residues include R57 and T58. Residue K85 coordinates L-aspartate. Positions 107, 134, and 137 each coordinate carbamoyl phosphate. L-aspartate-binding residues include R167 and R216. Carbamoyl phosphate contacts are provided by A260 and P261.

It belongs to the aspartate/ornithine carbamoyltransferase superfamily. ATCase family. Heterododecamer (2C3:3R2) of six catalytic PyrB chains organized as two trimers (C3), and six regulatory PyrI chains organized as three dimers (R2).

It carries out the reaction carbamoyl phosphate + L-aspartate = N-carbamoyl-L-aspartate + phosphate + H(+). Its pathway is pyrimidine metabolism; UMP biosynthesis via de novo pathway; (S)-dihydroorotate from bicarbonate: step 2/3. Its function is as follows. Catalyzes the condensation of carbamoyl phosphate and aspartate to form carbamoyl aspartate and inorganic phosphate, the committed step in the de novo pyrimidine nucleotide biosynthesis pathway. This chain is Aspartate carbamoyltransferase catalytic subunit, found in Fusobacterium nucleatum subsp. nucleatum (strain ATCC 25586 / DSM 15643 / BCRC 10681 / CIP 101130 / JCM 8532 / KCTC 2640 / LMG 13131 / VPI 4355).